The primary structure comprises 292 residues: Ribosomal protein L11 methyltransferase (292 aa).

Positions 143, 164, 186, and 228 each coordinate S-adenosyl-L-methionine.

This sequence belongs to the methyltransferase superfamily. PrmA family.

It is found in the cytoplasm. It catalyses the reaction L-lysyl-[protein] + 3 S-adenosyl-L-methionine = N(6),N(6),N(6)-trimethyl-L-lysyl-[protein] + 3 S-adenosyl-L-homocysteine + 3 H(+). Its function is as follows. Methylates ribosomal protein L11. The sequence is that of Ribosomal protein L11 methyltransferase from Aeromonas hydrophila subsp. hydrophila (strain ATCC 7966 / DSM 30187 / BCRC 13018 / CCUG 14551 / JCM 1027 / KCTC 2358 / NCIMB 9240 / NCTC 8049).